Here is a 123-residue protein sequence, read N- to C-terminus: Potassium voltage-gated channel subfamily E member 2 (123 aa).

N-linked (GlcNAc...) asparagine glycans are attached at residues asparagine 6 and asparagine 29. The chain crosses the membrane as a helical span at residues 49-69; sequence VILYLMVMIGMFSFIIVAILV. Over 70–123 the chain is Cytoplasmic; sequence STVKSKRREHSNDPYHQYIVEDWQEKYKSQILNLEESKATIHENIGAAGFKMSP.

The protein belongs to the potassium channel KCNE family. Interacts with KCNB1. Associates with KCNH2/ERG1. May associate with KCNQ2 and KCNQ3. Associates with HCN1 and probably HCN2. Heteromultimer with KCNC2. Interacts with KCNC2. Interacts with KCNQ1; forms a heterooligomer complex that targets to the membrane raft and leading to currents with an apparently instantaneous activation, a rapid deactivation process and a linear current-voltage relationship and decreases the amplitude of the outward current. As to expression, highly expressed in brain, heart, skeletal muscle, pancreas, placenta, kidney, colon and thymus. A small but significant expression is found in liver, ovary, testis, prostate, small intestine and leukocytes. Very low expression, nearly undetectable, in lung and spleen.

It localises to the cell membrane. Its subcellular location is the apical cell membrane. Its function is as follows. Ancillary protein that functions as a regulatory subunit of the voltage-gated potassium (Kv) channel complex composed of pore-forming and potassium-conducting alpha subunits and of regulatory beta subunits. KCNE2 beta subunit modulates the gating kinetics and enhances stability of the channel complex. Alters the gating of the delayed rectifier Kv channel containing KCNB1 alpha subunit. Associates with KCNH2/HERG alpha subunit Kv channel to form the rapidly activating component of the delayed rectifying potassium current (IKr) in heart. May associate with KCNQ2 and/or KCNQ3 alpha subunits to modulate the native M-type current. May associate with HCN1 and HCN2 channel subunits to increase potassium current. Forms a heterooligomer complex with KCNQ1/KVLQT1 alpha subunits which leads to currents with an apparently instantaneous activation, a rapid deactivation process and a linear current-voltage relationship and decreases the amplitude of the outward current. KCNQ1-KCNE2 channel associates with Na(+)-coupled myo-inositol symporter in the apical membrane of choroid plexus epithelium and regulates the myo-inositol gradient between blood and cerebrospinal fluid with an impact on neuron excitability. The chain is Potassium voltage-gated channel subfamily E member 2 from Homo sapiens (Human).